We begin with the raw amino-acid sequence, 331 residues long: 6-phosphogluconolactonase (331 aa).

Lys-287 is modified (N6-acetyllysine).

It belongs to the cycloisomerase 2 family.

It catalyses the reaction 6-phospho-D-glucono-1,5-lactone + H2O = 6-phospho-D-gluconate + H(+). The protein operates within carbohydrate degradation; pentose phosphate pathway; D-ribulose 5-phosphate from D-glucose 6-phosphate (oxidative stage): step 2/3. Its function is as follows. Catalyzes the hydrolysis of 6-phosphogluconolactone to 6-phosphogluconate. This Escherichia coli O6:K15:H31 (strain 536 / UPEC) protein is 6-phosphogluconolactonase.